We begin with the raw amino-acid sequence, 464 residues long: E3 ubiquitin-protein ligase parkin (464 aa).

In terms of domain architecture, Ubiquitin-like spans 1–76 (MIVFVRFNSS…VHIVQRPRRR (76 aa)). Residue Ser-65 is modified to Phosphoserine; by PINK1. A disordered region spans residues 70–96 (VQRPRRRSHETNASGGDEPQSTSEGSI). The necessary for PINK1-dependent localization to mitochondria stretch occupies residues 77-236 (SHETNASGGD…LITSNRRSIP (160 aa)). Thr-80 bears the Phosphothreonine mark. The segment covering 80-96 (TNASGGDEPQSTSEGSI) has biased composition (polar residues). An RING-type 0; atypical zinc finger spans residues 140–224 (PTYNSFFIYC…PTSDKDTSVA (85 aa)). Residue Thr-174 is modified to Phosphothreonine; by PINK1. Residues 203–237 (TRAEFFFKCGAHPTSDKDTSVALNLITSNRRSIPC) are SYT11 binding 1. Position 216 is a phosphothreonine (Thr-216). Residues 233–464 (RSIPCIACTD…ACMGDHWFDV (232 aa)) form a TRIAD supradomain region. Zn(2+) is bound by residues Cys-237, Cys-240, Cys-252, His-256, Cys-259, Cys-262, Cys-288, Cys-292, Cys-331, and Cys-336. Residues 237-292 (CIACTDVRSPVLVFQCNHRHVICLDCFHLYCVTRLNDRQFVHDAQLGYSLPCVAGC) form an RING-type 1 zinc finger. Residues 256-292 (HVICLDCFHLYCVTRLNDRQFVHDAQLGYSLPCVAGC) form an SYT11 binding 2 region. An IBR-type zinc finger spans residues 312 to 376 (TRYQQYGAEE…CKEAYHEGDC (65 aa)). Residue Lys-348 forms a Glycyl lysine isopeptide (Lys-Gly) (interchain with G-Cter in ISG15) linkage. Positions 351, 359, 364, and 367 each coordinate Zn(2+). Lys-368 is covalently cross-linked (Glycyl lysine isopeptide (Lys-Gly) (interchain with G-Cter in ISG15)). The Zn(2+) site is built by His-372 and Cys-376. The segment at 377–409 (DSLLEPSGATSQAYRVDKRAAEQARWEEASKET) is REP. Zn(2+) contacts are provided by Cys-417 and Cys-420. The RING-type 2; atypical zinc finger occupies 417-448 (CPRCNVPIEKNGGCMHMKCPQPQCKLEWCWNC). Residue Cys-430 is part of the active site. Zn(2+) is bound by residues Cys-435, Cys-440, Cys-445, Cys-448, Cys-456, and His-460.

This sequence belongs to the RBR family. Parkin subfamily. Forms an E3 ubiquitin ligase complex with UBE2L3 or UBE2L6. Mediates 'Lys-63'-linked polyubiquitination by associating with UBE2V1. Part of a SCF-like complex, consisting of PRKN, CUL1 and FBXW7. Interacts with SNCAIP. Binds to the C2A and C2B domains of SYT11. Interacts and regulates the turnover of SEPTIN5. Part of a complex, including STUB1, HSP70 and GPR37. The amount of STUB1 in the complex increases during ER stress. STUB1 promotes the dissociation of HSP70 from PRKN and GPR37, thus facilitating PRKN-mediated GPR37 ubiquitination. HSP70 transiently associates with unfolded GPR37 and inhibits the E3 activity of PRKN, whereas, STUB1 enhances the E3 activity of PRKN through promotion of dissociation of HSP70 from PRKN-GPR37 complexes. Interacts with PSMD4 and PACRG. Interacts with LRRK2. Interacts with RANBP2. Interacts with SUMO1 but not SUMO2, which promotes nuclear localization and autoubiquitination. Interacts (via first RING-type domain) with AIMP2 (via N-terminus). Interacts with PSMA7 and RNF41. Interacts with PINK1. Forms a complex with PINK1 and PARK7. Interacts with CHPF, the interaction with isoform 2 may facilitate PRKN transport into the mitochondria. Interacts with MFN2 (phosphorylated), promotes PRKN localization in dysfunctional depolarized mitochondria. Interacts with FBXO7; this promotes translocation to dysfunctional depolarized mitochondria. Interacts with ZNF746. Interacts with heat shock protein 70 family members, including HSPA1L, HSPA1A and HSPA8; interaction HSPA1L promotes translocation to damaged mitochondria. Interacts with BAG4 and, to a lesser extent, BAG5; interaction with BAG4 inhibits translocation to damaged mitochondria. Forms a complex with PRKN and PARK7. Interacts with AMBRA1. In terms of processing, auto-ubiquitinates in an E2-dependent manner leading to its own degradation. Also polyubiquitinated by RNF41 for proteasomal degradation. Post-translationally, S-nitrosylated. Phosphorylated. Activation requires phosphorylation at Ser-65 by PINK1 and binding to PINK1 phosphorylated ubiquitin. Phosphorylation at Thr-174 by PINK1 and at Thr-216 is important for mitochondrial localization. In terms of tissue distribution, expressed in all subdivisions of the brain (at protein level). Highly expressed in brainstem, cranial nerve, pontine, cerebellar nuclei, indusium griseum, nuclei reticularis, strata oriens and laccunosum moleculare of the hippocampal CA2 region. Low levels were found in the telencephalon and diencephalon. Expressed in heart, liver, skeletal muscle, kidney and testis.

The protein resides in the cytoplasm. Its subcellular location is the cytosol. It localises to the nucleus. The protein localises to the endoplasmic reticulum. It is found in the mitochondrion. The protein resides in the mitochondrion outer membrane. Its subcellular location is the cell projection. It localises to the neuron projection. The protein localises to the postsynaptic density. It is found in the presynapse. The catalysed reaction is [E2 ubiquitin-conjugating enzyme]-S-ubiquitinyl-L-cysteine + [acceptor protein]-L-lysine = [E2 ubiquitin-conjugating enzyme]-L-cysteine + [acceptor protein]-N(6)-ubiquitinyl-L-lysine.. It participates in protein modification; protein ubiquitination. With respect to regulation, in the autoinhibited state the side chain of Phe-462 inserts into a hydrophobic groove in RING-0, occluding the ubiquitin acceptor site Cys-430, whereas the REP repressor element binds RING-1 and blocks its E2-binding site. Activation of PRKN requires 2 steps: (1) phosphorylation at Ser-65 by PINK1 and (2) binding to phosphorylated ubiquitin, leading to unlock repression of the catalytic Cys-430 by the RING-0 region via an allosteric mechanism and converting PRKN to its fully-active form. According to another report, phosphorylation at Ser-65 by PINK1 is not essential for activation and only binding to phosphorylated ubiquitin is essential to unlock repression. In addition, ISG15 conjugation positively regulates its ubiquitin E3 ligase activity by suppressing the intramolecular interaction that maintains its autoinhibited conformation. Functionally, functions within a multiprotein E3 ubiquitin ligase complex, catalyzing the covalent attachment of ubiquitin moieties onto substrate proteins. Substrates include SYT11 and VDAC1. Other substrates are BCL2, CCNE1, GPR37, RHOT1/MIRO1, MFN1, MFN2, STUB1, SNCAIP, SEPTIN5, TOMM20, USP30, ZNF746, MIRO1 and AIMP2. Mediates monoubiquitination as well as 'Lys-6', 'Lys-11', 'Lys-48'-linked and 'Lys-63'-linked polyubiquitination of substrates depending on the context. Participates in the removal and/or detoxification of abnormally folded or damaged protein by mediating 'Lys-63'-linked polyubiquitination of misfolded proteins such as PARK7: 'Lys-63'-linked polyubiquitinated misfolded proteins are then recognized by HDAC6, leading to their recruitment to aggresomes, followed by degradation. Mediates 'Lys-63'-linked polyubiquitination of a 22 kDa O-linked glycosylated isoform of SNCAIP, possibly playing a role in Lewy-body formation. Mediates monoubiquitination of BCL2, thereby acting as a positive regulator of autophagy. Protects against mitochondrial dysfunction during cellular stress, by acting downstream of PINK1 to coordinate mitochondrial quality control mechanisms that remove and replace dysfunctional mitochondrial components. Depending on the severity of mitochondrial damage and/or dysfunction, activity ranges from preventing apoptosis and stimulating mitochondrial biogenesis to regulating mitochondrial dynamics and eliminating severely damaged mitochondria via mitophagy. Activation and recruitment onto the outer membrane of damaged/dysfunctional mitochondria (OMM) requires PINK1-mediated phosphorylation of both PRKN and ubiquitin. After mitochondrial damage, functions with PINK1 to mediate the decision between mitophagy or preventing apoptosis by inducing either the poly- or monoubiquitination of VDAC1, respectively; polyubiquitination of VDAC1 promotes mitophagy, while monoubiquitination of VDAC1 decreases mitochondrial calcium influx which ultimately inhibits apoptosis. When cellular stress results in irreversible mitochondrial damage, promotes the autophagic degradation of dysfunctional depolarized mitochondria (mitophagy) by promoting the ubiquitination of mitochondrial proteins such as TOMM20, RHOT1/MIRO1, MFN1 and USP30. Preferentially assembles 'Lys-6'-, 'Lys-11'- and 'Lys-63'-linked polyubiquitin chains, leading to mitophagy. The PINK1-PRKN pathway also promotes fission of damaged mitochondria by PINK1-mediated phosphorylation which promotes the PRKN-dependent degradation of mitochondrial proteins involved in fission such as MFN2. This prevents the refusion of unhealthy mitochondria with the mitochondrial network or initiates mitochondrial fragmentation facilitating their later engulfment by autophagosomes. Regulates motility of damaged mitochondria via the ubiquitination and subsequent degradation of MIRO1 and MIRO2; in motor neurons, this likely inhibits mitochondrial intracellular anterograde transport along the axons which probably increases the chance of the mitochondria undergoing mitophagy in the soma. Involved in mitochondrial biogenesis via the 'Lys-48'-linked polyubiquitination of transcriptional repressor ZNF746/PARIS which leads to its subsequent proteasomal degradation and allows activation of the transcription factor PPARGC1A. Limits the production of reactive oxygen species (ROS). Regulates cyclin-E during neuronal apoptosis. In collaboration with CHPF isoform 2, may enhance cell viability and protect cells from oxidative stress. Independently of its ubiquitin ligase activity, protects from apoptosis by the transcriptional repression of p53/TP53. May protect neurons against alpha synuclein toxicity, proteasomal dysfunction, GPR37 accumulation, and kainate-induced excitotoxicity. May play a role in controlling neurotransmitter trafficking at the presynaptic terminal and in calcium-dependent exocytosis. May represent a tumor suppressor gene. This Mus musculus (Mouse) protein is E3 ubiquitin-protein ligase parkin.